Here is a 322-residue protein sequence, read N- to C-terminus: Acetyl-coenzyme A carboxylase carboxyl transferase subunit alpha (322 aa).

The CoA carboxyltransferase C-terminal domain occupies 39–293 (RLQKKSQALT…RRALTDTLAE (255 aa)).

This sequence belongs to the AccA family. In terms of assembly, acetyl-CoA carboxylase is a heterohexamer composed of biotin carboxyl carrier protein (AccB), biotin carboxylase (AccC) and two subunits each of ACCase subunit alpha (AccA) and ACCase subunit beta (AccD).

Its subcellular location is the cytoplasm. The catalysed reaction is N(6)-carboxybiotinyl-L-lysyl-[protein] + acetyl-CoA = N(6)-biotinyl-L-lysyl-[protein] + malonyl-CoA. It functions in the pathway lipid metabolism; malonyl-CoA biosynthesis; malonyl-CoA from acetyl-CoA: step 1/1. Its function is as follows. Component of the acetyl coenzyme A carboxylase (ACC) complex. First, biotin carboxylase catalyzes the carboxylation of biotin on its carrier protein (BCCP) and then the CO(2) group is transferred by the carboxyltransferase to acetyl-CoA to form malonyl-CoA. The polypeptide is Acetyl-coenzyme A carboxylase carboxyl transferase subunit alpha (Thiobacillus denitrificans (strain ATCC 25259 / T1)).